The primary structure comprises 204 residues: Large ribosomal subunit protein uL4 (204 aa).

The segment at 53 to 74 is disordered; sequence AYVSGGGKKPWRQKGRGGARAG.

Belongs to the universal ribosomal protein uL4 family. As to quaternary structure, part of the 50S ribosomal subunit.

One of the primary rRNA binding proteins, this protein initially binds near the 5'-end of the 23S rRNA. It is important during the early stages of 50S assembly. It makes multiple contacts with different domains of the 23S rRNA in the assembled 50S subunit and ribosome. Functionally, forms part of the polypeptide exit tunnel. This Campylobacter curvus (strain 525.92) protein is Large ribosomal subunit protein uL4.